Here is a 355-residue protein sequence, read N- to C-terminus: 45 kDa calcium-binding protein (355 aa).

The first 29 residues, 1–29 (MASRQGPLCGLAPCCLWLLGVILLMNASA), serve as a signal peptide directing secretion. An N-linked (GlcNAc...) asparagine glycan is attached at N26. EF-hand domains lie at 91 to 126 (KSRRKLMVIFSKVDLNTDRRISAKEMQKWIMQKTAE) and 130 to 165 (EAVAESRAHFRAVDPDGDGHVSWDEYKVKFLATKGH). A Phosphoserine modification is found at S92. Residues D104, N106, D108, R110, E115, D143, D145, D147, H149, and E154 each contribute to the Ca(2+) site. Phosphothreonine occurs at positions 186 and 210. EF-hand domains lie at 226 to 261 (MLQFMVKEIIRDLDQDGDKKLSLSEFISLPVGTVEN), 271 to 306 (WVRDRKREFEELIDANHDGIVTMAELEDYMDPMNEF), and 307 to 342 (SALNEAKQMIAIADENQNHYLEPEEVLKYSEFFTGS). Residues D239, D241, D243, K245, and E250 each coordinate Ca(2+). T258 bears the Phosphothreonine mark. D284, N286, and D288 together coordinate Ca(2+). A Phosphothreonine modification is found at T292. E295, D320, N322, N324, Y326, and E331 together coordinate Ca(2+). A necessary for intracellular retention in Golgi apparatus lumen region spans residues 302–355 (PMNEFSALNEAKQMIAIADENQNHYLEPEEVLKYSEFFTGSKLVDYARSVHEEF).

It belongs to the CREC family.

The protein localises to the golgi apparatus lumen. May regulate calcium-dependent activities in the endoplasmic reticulum lumen or post-ER compartment. This is 45 kDa calcium-binding protein (SDF4) from Capra hircus (Goat).